We begin with the raw amino-acid sequence, 360 residues long: Peptide chain release factor 1 (360 aa).

At Gln235 the chain carries N5-methylglutamine. The tract at residues 285–304 is disordered; sequence KRQQEEASTRRNLLGSGDRS.

The protein belongs to the prokaryotic/mitochondrial release factor family. In terms of processing, methylated by PrmC. Methylation increases the termination efficiency of RF1.

It is found in the cytoplasm. Peptide chain release factor 1 directs the termination of translation in response to the peptide chain termination codons UAG and UAA. This chain is Peptide chain release factor 1, found in Edwardsiella ictaluri (strain 93-146).